A 201-amino-acid chain; its full sequence is Molybdenum cofactor guanylyltransferase (201 aa).

GTP-binding positions include 14–16, lysine 31, and aspartate 104; that span reads LAG. Aspartate 104 is a Mg(2+) binding site.

Belongs to the MobA family. As to quaternary structure, monomer. It depends on Mg(2+) as a cofactor.

The protein localises to the cytoplasm. The catalysed reaction is Mo-molybdopterin + GTP + H(+) = Mo-molybdopterin guanine dinucleotide + diphosphate. In terms of biological role, transfers a GMP moiety from GTP to Mo-molybdopterin (Mo-MPT) cofactor (Moco or molybdenum cofactor) to form Mo-molybdopterin guanine dinucleotide (Mo-MGD) cofactor. In Helicobacter pylori (strain P12), this protein is Molybdenum cofactor guanylyltransferase.